The chain runs to 95 residues: Co-chaperonin GroES (95 aa).

Belongs to the GroES chaperonin family. Heptamer of 7 subunits arranged in a ring. Interacts with the chaperonin GroEL.

The protein resides in the cytoplasm. Functionally, together with the chaperonin GroEL, plays an essential role in assisting protein folding. The GroEL-GroES system forms a nano-cage that allows encapsulation of the non-native substrate proteins and provides a physical environment optimized to promote and accelerate protein folding. GroES binds to the apical surface of the GroEL ring, thereby capping the opening of the GroEL channel. This is Co-chaperonin GroES from Streptococcus equi subsp. equi (strain 4047).